The following is an 89-amino-acid chain: MSITQERKSALIAEHARGKTDTGSPEVQVAILTTRIANLTEHFKTHKKDNHSRRGLLKMVSQRRRLLDYVKNKDVARYQAIIEKLGLRR.

Positions 1–20 are enriched in basic and acidic residues; it reads MSITQERKSALIAEHARGKT. The segment at 1–24 is disordered; sequence MSITQERKSALIAEHARGKTDTGS.

Belongs to the universal ribosomal protein uS15 family. As to quaternary structure, part of the 30S ribosomal subunit. Forms a bridge to the 50S subunit in the 70S ribosome, contacting the 23S rRNA.

Functionally, one of the primary rRNA binding proteins, it binds directly to 16S rRNA where it helps nucleate assembly of the platform of the 30S subunit by binding and bridging several RNA helices of the 16S rRNA. In terms of biological role, forms an intersubunit bridge (bridge B4) with the 23S rRNA of the 50S subunit in the ribosome. This Maricaulis maris (strain MCS10) (Caulobacter maris) protein is Small ribosomal subunit protein uS15.